Consider the following 274-residue polypeptide: RNA polymerase sigma factor SigI4 (274 aa).

The Polymerase core binding signature appears at 87–100 (EEYSVGLMAFNEAI). The H-T-H motif DNA-binding region spans 226-245 (LSELMGLVNVHRKTVERNRK).

It belongs to the sigma-70 factor family. SigI subfamily. As to quaternary structure, interacts with RsgI4.

It is found in the cytoplasm. Negatively regulated by the anti-sigma-I factor RsgI4. Binding of the polysaccharide substrate to RsgI4 may lead to the release and activation of SigI4. Sigma factors are initiation factors that promote the attachment of RNA polymerase to specific initiation sites and are then released. This sigma factor is involved in regulation of cellulosomal genes via an external polysaccharide-sensing mechanism. This is RNA polymerase sigma factor SigI4 from Acetivibrio thermocellus (strain ATCC 27405 / DSM 1237 / JCM 9322 / NBRC 103400 / NCIMB 10682 / NRRL B-4536 / VPI 7372) (Clostridium thermocellum).